Here is a 307-residue protein sequence, read N- to C-terminus: Pantothenate kinase (307 aa).

87–94 (GSVAVGKS) lines the ATP pocket.

The protein belongs to the prokaryotic pantothenate kinase family.

The protein resides in the cytoplasm. It carries out the reaction (R)-pantothenate + ATP = (R)-4'-phosphopantothenate + ADP + H(+). It functions in the pathway cofactor biosynthesis; coenzyme A biosynthesis; CoA from (R)-pantothenate: step 1/5. The polypeptide is Pantothenate kinase (Vibrio vulnificus (strain CMCP6)).